We begin with the raw amino-acid sequence, 261 residues long: MRDSKRVVLYISIIVLSIFIIGCGKGNEIKEDAKEEQIKKSFAKTLDMYPIKNLEDLYDKEGYRDGEFKKGDKGMWTIYTDFAKSNRPGVLDNEGMVLNLDRNTRTAKGYYFVDTIYDNHENSYSKNYRVEMKNNKIILLDKVEDQKLKERIENFKFFGQYADFKSLKSYNHGDVSINSNVPSYDAKFKMSNKDENVKQLRSRYNIPTDKAPILKMHIDGDLKGSSVGYKKLEIDFSKEENSELSIVDSLNFQPAKNKDDE.

An N-terminal signal peptide occupies residues 1–22; the sequence is MRDSKRVVLYISIIVLSIFIIG. C23 carries N-palmitoyl cysteine lipidation. C23 carries S-diacylglycerol cysteine lipidation.

It belongs to the staphylococcal tandem lipoprotein family.

Its subcellular location is the cell membrane. This is an uncharacterized protein from Staphylococcus aureus (strain Mu50 / ATCC 700699).